The primary structure comprises 191 residues: Protein Ves (191 aa).

This sequence belongs to the Ves family.

This chain is Protein Ves, found in Shigella flexneri serotype 5b (strain 8401).